We begin with the raw amino-acid sequence, 400 residues long: Large envelope protein (400 aa).

Residue methionine 1 is modified to N-acetylmethionine. 2 disordered regions span residues 1–42 (MGGY…NNPD) and 84–118 (ILTT…SHPQ). The N-myristoyl glycine; by host moiety is linked to residue glycine 2. The segment at 2–119 (GGYSSKPRKG…PPLRDSHPQA (118 aa)) is pre-S1. The pre-S stretch occupies residues 2-174 (GGYSSKPRKG…FSRTGDPVPK (173 aa)). The Virion surface; in external conformation segment spans residues 2–181 (GGYSSKPRKG…VPKMENTTSG (180 aa)). The Intravirion; in internal conformation segment spans residues 2–253 (GGYSSKPRKG…PGYRWMCLRR (252 aa)). N-linked (GlcNAc...) asparagine glycosylation occurs at tyrosine 4. The interval 120–174 (MQWNSTTFHQALLDPRVRGLYFPAGGSSSGTANPVPTTASPISSIFSRTGDPVPK) is pre-S2. Residues 182 to 202 (FLGPLLVLQAGFFLLTRILTI) form a helical membrane-spanning segment. Topologically, residues 203–253 (PQSLDSWWTSLNFLGGAPACPGQNSQSPTSNHSPTSCPPICPGYRWMCLRR) are intravirion; in external conformation. The chain crosses the membrane as a helical span at residues 254–274 (FIIFLFILLLCLIFLLVLLDY). At 275 to 348 (QGMLPVCPLI…WASVRFSWLS (74 aa)) the chain is on the virion surface side. Asparagine 320 is a glycosylation site (N-linked (GlcNAc...) asparagine; by host). The helical transmembrane segment at 349–369 (LLAPFVQWFVGLSPTVWLSVI) threads the bilayer. Residues 370–375 (WMMWYW) are Intravirion-facing. A helical membrane pass occupies residues 376–398 (GPSLYNILSPFLPLLPIFFCLWV). At 399 to 400 (YI) the chain is on the virion surface side.

The protein belongs to the orthohepadnavirus major surface antigen family. In terms of assembly, in its internal form (Li-HBsAg), interacts with the capsid protein and with the isoform S. Interacts with host chaperone CANX. Associates with host chaperone CANX through its pre-S2 N glycan; this association may be essential for isoform M proper secretion. As to quaternary structure, interacts with isoform L. Interacts with the antigens of satellite virus HDV (HDVAgs); this interaction is required for encapsidation of HDV genomic RNA. Isoform M is N-terminally acetylated by host at a ratio of 90%, and N-glycosylated by host at the pre-S2 region. In terms of processing, myristoylated.

The protein localises to the virion membrane. The large envelope protein exists in two topological conformations, one which is termed 'external' or Le-HBsAg and the other 'internal' or Li-HBsAg. In its external conformation the protein attaches the virus to cell receptors and thereby initiating infection. This interaction determines the species specificity and liver tropism. This attachment induces virion internalization predominantly through caveolin-mediated endocytosis. The large envelope protein also assures fusion between virion membrane and endosomal membrane. In its internal conformation the protein plays a role in virion morphogenesis and mediates the contact with the nucleocapsid like a matrix protein. Its function is as follows. The middle envelope protein plays an important role in the budding of the virion. It is involved in the induction of budding in a nucleocapsid independent way. In this process the majority of envelope proteins bud to form subviral lipoprotein particles of 22 nm of diameter that do not contain a nucleocapsid. The chain is Large envelope protein from Homo sapiens (Human).